The primary structure comprises 277 residues: 2,3,4,5-tetrahydropyridine-2,6-dicarboxylate N-succinyltransferase (277 aa).

The substrate site is built by arginine 106 and aspartate 143.

Belongs to the transferase hexapeptide repeat family. As to quaternary structure, homotrimer.

Its subcellular location is the cytoplasm. The enzyme catalyses (S)-2,3,4,5-tetrahydrodipicolinate + succinyl-CoA + H2O = (S)-2-succinylamino-6-oxoheptanedioate + CoA. The protein operates within amino-acid biosynthesis; L-lysine biosynthesis via DAP pathway; LL-2,6-diaminopimelate from (S)-tetrahydrodipicolinate (succinylase route): step 1/3. The chain is 2,3,4,5-tetrahydropyridine-2,6-dicarboxylate N-succinyltransferase from Xylella fastidiosa (strain Temecula1 / ATCC 700964).